A 664-amino-acid polypeptide reads, in one-letter code: Chaperone protein DnaK (664 aa).

Position 201 is a phosphothreonine; by autocatalysis (Thr201). Disordered stretches follow at residues 516-538 (DAEK…NEAD) and 578-664 (APVE…KPND). Positions 578–592 (APVEKIKDASEELSR) are enriched in basic and acidic residues. 2 stretches are compositionally biased toward low complexity: residues 600-617 (AMQS…ANAQ) and 638-649 (AGNSASSNSNNE).

This sequence belongs to the heat shock protein 70 family.

In terms of biological role, acts as a chaperone. In Chlamydia caviae (strain ATCC VR-813 / DSM 19441 / 03DC25 / GPIC) (Chlamydophila caviae), this protein is Chaperone protein DnaK.